Here is a 320-residue protein sequence, read N- to C-terminus: Cytochrome c biogenesis protein CcsA (320 aa).

Helical transmembrane passes span 14–34 (VLLL…WCFW), 68–88 (GHFP…ACTL), 101–121 (LVAA…SFAL), 146–166 (VIMV…AVLM), 226–246 (TITV…VWAN), 260–277 (TWAL…HTRL), and 289–309 (VASL…LLGI).

This sequence belongs to the CcmF/CycK/Ccl1/NrfE/CcsA family. As to quaternary structure, may interact with ccs1.

Its subcellular location is the cellular thylakoid membrane. In terms of biological role, required during biogenesis of c-type cytochromes (cytochrome c6 and cytochrome f) at the step of heme attachment. This chain is Cytochrome c biogenesis protein CcsA, found in Synechococcus sp. (strain WH7803).